A 261-amino-acid chain; its full sequence is uncharacterized protein (261 aa).

An N-terminal signal peptide occupies residues 1–22 (MRDSKRVVLYISIIVLSIFIIG). Residue C23 is the site of N-palmitoyl cysteine attachment. A lipid anchor (S-diacylglycerol cysteine) is attached at C23.

Belongs to the staphylococcal tandem lipoprotein family.

Its subcellular location is the cell membrane. This is an uncharacterized protein from Staphylococcus aureus (strain Mu50 / ATCC 700699).